A 106-amino-acid polypeptide reads, in one-letter code: Iron-sulfur cluster assembly protein CyaY (106 aa).

Belongs to the frataxin family.

Its function is as follows. Involved in iron-sulfur (Fe-S) cluster assembly. May act as a regulator of Fe-S biogenesis. This is Iron-sulfur cluster assembly protein CyaY from Salmonella arizonae (strain ATCC BAA-731 / CDC346-86 / RSK2980).